Here is a 632-residue protein sequence, read N- to C-terminus: Nucleoside triphosphatase I (632 aa).

In terms of domain architecture, Helicase ATP-binding spans 42–204; sequence FLGLDKMHSL…IMLVNLLRPK (163 aa). Position 55 to 62 (55 to 62) interacts with ATP; the sequence is HETGVGKT. Positions 141 to 144 match the DEXH box motif; the sequence is DECH. The Helicase C-terminal domain occupies 367–532; sequence KFTDVCLRIL…EFTQLFKVFK (166 aa). The interval 457-524 is binding to the cap-specific mRNA (nucleoside-2'-O-)-methyltransferase; that stretch reads DIFILDMTWN…DIIRNKSKEF (68 aa).

Belongs to the helicase family. NPH I subfamily. In terms of assembly, monomer. Interacts (via C-terminus) with RAP94 (via N-terminus). Interacts with the cap-specific mRNA (nucleoside-2'-O-)-methyltransferase.

Its subcellular location is the virion. It catalyses the reaction a ribonucleoside 5'-triphosphate + H2O = a ribonucleoside 5'-diphosphate + phosphate + H(+). DNA-dependent ATPase required for providing the needed energy to achieve the termination of early transcripts. Acts in concert with the RAP94 subunit of the virion RNA polymerase and the capping enzyme/VTF to catalyze release of UUUUUNU-containing nascent RNA from the elongation complex. NPH-I must bind ssDNA in order to exhibit ATPase activity. The protein is Nucleoside triphosphatase I (NPH1) of Rabbit fibroma virus (strain Kasza) (RFV).